Reading from the N-terminus, the 707-residue chain is Casein kinase 1-like protein HD16 (707 aa).

A disordered region spans residues 19–67 (YDVQDADPAASPVSPAPRGRTGRRGGAAAGRGNKTVAEGGGRKALKPRG). Positions 24 to 37 (ADPAASPVSPAPRG) are enriched in low complexity. The Protein kinase domain maps to 147–425 (YITDRKLGKG…KLISLFDGLI (279 aa)). ATP is bound by residues 153–161 (LGKGGFGQV) and Lys-184. The active-site Proton acceptor is the Asp-276.

Belongs to the protein kinase superfamily. CK1 Ser/Thr protein kinase family. Casein kinase I subfamily. In terms of assembly, monomer. Interacts with GHD7 (via C-terminus). Interacts with SLR1. In terms of processing, autophosphorylated. As to expression, expressed in roots, leaves and stems. Expressed in leaf vascular bundles, and proximal regions of the shoot and roots.

Its subcellular location is the cytoplasm. It is found in the nucleus. It carries out the reaction L-seryl-[protein] + ATP = O-phospho-L-seryl-[protein] + ADP + H(+). It catalyses the reaction L-threonyl-[protein] + ATP = O-phospho-L-threonyl-[protein] + ADP + H(+). Functionally, casein kinases are operationally defined by their preferential utilization of acidic proteins such as caseins as substrates. It can phosphorylate a large number of proteins. Can phosphorylate casein on threonine residues in vitro. Involved in the regulation of flowering time through gibberellin (GA) signaling, and independently of photoperiod. Phosphorylates the DELLA protein SLR1, stabilizing SLR1 protein and sustaining SLR1 activity as repressor of GA signaling. Required for normal development of male floral organs and grains, through modulation of GA signaling. Targeted and repressed by the homeobox protein HAZ1 during GA signaling. Can phosphorylate phosvitin and SLR1 in vitro. Is not required for clock function in either the presence or the absence of light signals. Involved in a genetic control pathway for photoperiodic flowering under long day (LD) conditions that includes HD1, GHD7, HD5 and HD2. Phosphorylates and activates GHD7, a major floral repressor under LD conditions. Phosphorylation of GHD7 enhances its function in the repression of EHD1, HD3A and HD3B/RFT1, and obviously delaying flowering. In Oryza sativa subsp. japonica (Rice), this protein is Casein kinase 1-like protein HD16.